The primary structure comprises 597 residues: Adenine deaminase (597 aa).

Belongs to the metallo-dependent hydrolases superfamily. Adenine deaminase family. It depends on Mn(2+) as a cofactor.

The enzyme catalyses adenine + H2O + H(+) = hypoxanthine + NH4(+). The polypeptide is Adenine deaminase (Paracoccus denitrificans (strain Pd 1222)).